The following is a 26-amino-acid chain: Dermaseptin-B5 (26 aa).

A Valine amide modification is found at valine 26.

Belongs to the frog skin active peptide (FSAP) family. Dermaseptin subfamily. Expressed by the skin glands.

The protein localises to the secreted. In terms of biological role, possesses a potent antimicrobial activity against Gram-positive and Gram-negative bacteria. Probably acts by disturbing membrane functions with its amphipathic structure. The protein is Dermaseptin-B5 of Phyllomedusa bicolor (Two-colored leaf frog).